Here is a 253-residue protein sequence, read N- to C-terminus: Ribosomal RNA small subunit methyltransferase A (253 aa).

Residues H12, L14, G39, E60, D81, and N104 each coordinate S-adenosyl-L-methionine.

The protein belongs to the class I-like SAM-binding methyltransferase superfamily. rRNA adenine N(6)-methyltransferase family. RsmA subfamily.

Its subcellular location is the cytoplasm. The catalysed reaction is adenosine(1518)/adenosine(1519) in 16S rRNA + 4 S-adenosyl-L-methionine = N(6)-dimethyladenosine(1518)/N(6)-dimethyladenosine(1519) in 16S rRNA + 4 S-adenosyl-L-homocysteine + 4 H(+). Specifically dimethylates two adjacent adenosines (A1518 and A1519) in the loop of a conserved hairpin near the 3'-end of 16S rRNA in the 30S particle. May play a critical role in biogenesis of 30S subunits. This chain is Ribosomal RNA small subunit methyltransferase A, found in Paracidovorax citrulli (strain AAC00-1) (Acidovorax citrulli).